The chain runs to 864 residues: Leucine--tRNA ligase (864 aa).

The 'HIGH' region motif lies at 40–51 (PYPSGAGLHVGH). The short motif at 636 to 640 (KMSKS) is the 'KMSKS' region element. K639 serves as a coordination point for ATP.

This sequence belongs to the class-I aminoacyl-tRNA synthetase family.

It localises to the cytoplasm. The enzyme catalyses tRNA(Leu) + L-leucine + ATP = L-leucyl-tRNA(Leu) + AMP + diphosphate. This is Leucine--tRNA ligase from Leptospira borgpetersenii serovar Hardjo-bovis (strain JB197).